The following is a 318-amino-acid chain: Peroxisomal and mitochondrial division factor 1 (318 aa).

Positions 1-39 (MADVEDRAAKGISDYDQGGVKTTELERKIEDMENKNQEL) are disordered. Residues 1-291 (MADVEDRAAK…QKGSLEAEYQ (291 aa)) are Cytoplasmic-facing. The stretch at 19–260 (GVKTTELERK…KKVEEGNKTV (242 aa)) forms a coiled coil. The segment covering 23 to 39 (TELERKIEDMENKNQEL) has biased composition (basic and acidic residues). The chain crosses the membrane as a helical span at residues 292–312 (WPVVAAGSVGAAGLVAATFFV). Topologically, residues 313–318 (CYSKLR) are mitochondrial intermembrane.

Homodimer. Interacts with PMD2.

The protein localises to the peroxisome membrane. It is found in the mitochondrion outer membrane. Functionally, involved in morphogenesis and proliferation of peroxisomes and mitochondria, independently from the previously defined pathway controlled by the FIS1-DRP3 complex. This chain is Peroxisomal and mitochondrial division factor 1, found in Arabidopsis thaliana (Mouse-ear cress).